The primary structure comprises 541 residues: MAKEVRFSEDARTRMQAGIDKLADAVKTTIGPKGRNVVLEQSYGTPTITNDGVTIAKAVELDDHYENMGAKLVTEAASKTNDVAGDGTTTATVLTQAIVNEGLKNVTAGANPVGIRSGIEKATAAAVAGLNKNSHEVEDSSSIQQIASISAANEEIGKLIADAMEKVGHDGVITIEESKGIETELDVVEGMQFDRGYMSQYFVTDNDKMETNLDNPYLLITDQKIGNIQDILPVLQSVVEQGRSLLIIADDITGEALPTLVLNKLRGTFNVAAVKAPGFGDRRKAQLQDIAILTGATVVTEDLGLQLKDVTIDQLGQANRVTITKDKTTIVEGKGDKTALADRIKSIRQEIDSTTSDFDREKLQERLAKLAGGVAVVRVGAATETELKEKKYRIEDALNATRAAVEEGFVAGGGTAFVNIIPEVKKVADSLQGDVATGARIVLRALEEPLRQIVENAGLEGSVIAQRAKSEKPEVGFNAATGEWVNMIDAGIVDPTKVTRSALQNAASVSAMILTTEAVVAELPKKDAPAAPNAGGMPGMM.

Residues Thr-29–Pro-32, Asp-86–Thr-90, Gly-413, Asn-478–Ala-480, and Asp-494 each bind ATP.

The protein belongs to the chaperonin (HSP60) family. As to quaternary structure, forms a cylinder of 14 subunits composed of two heptameric rings stacked back-to-back. Interacts with the co-chaperonin GroES.

It is found in the cytoplasm. The enzyme catalyses ATP + H2O + a folded polypeptide = ADP + phosphate + an unfolded polypeptide.. Its function is as follows. Together with its co-chaperonin GroES, plays an essential role in assisting protein folding. The GroEL-GroES system forms a nano-cage that allows encapsulation of the non-native substrate proteins and provides a physical environment optimized to promote and accelerate protein folding. The polypeptide is Chaperonin GroEL (Oenococcus oeni (strain ATCC BAA-331 / PSU-1)).